The following is a 383-amino-acid chain: F-box/kelch-repeat protein At1g16250 (383 aa).

Positions 7–54 constitute an F-box domain; that stretch reads SIIPGLPDDLALRCIAKLSHGYHGVLECVSRGWRDLVRGADYSCYKAR. Kelch repeat units lie at residues 50 to 103, 109 to 165, 166 to 214, 216 to 263, and 318 to 377; these read CYKA…GFAC, CLLV…SVSG, KVYV…SYRG, FHVL…VMKN, and ELYV…CVSL.

In Arabidopsis thaliana (Mouse-ear cress), this protein is F-box/kelch-repeat protein At1g16250.